The chain runs to 192 residues: Probable apo-citrate lyase phosphoribosyl-dephospho-CoA transferase (192 aa).

The protein belongs to the CitX family.

It carries out the reaction apo-[citrate lyase ACP] + 2'-(5''-triphospho-alpha-D-ribosyl)-3'-dephospho-CoA = holo-[citrate lyase ACP] + diphosphate. Transfers 2-(5''-triphosphoribosyl)-3'-dephosphocoenzyme-A on a serine residue to the apo-acyl carrier protein (gamma chain) of the citrate lyase to yield holo-acyl carrier protein. The chain is Probable apo-citrate lyase phosphoribosyl-dephospho-CoA transferase from Streptococcus pyogenes serotype M18 (strain MGAS8232).